Consider the following 277-residue polypeptide: MKGSIWTIGDVQGCCAPLAELLAHPEIAGDTDSRFWFAGDLVNRGPQSLAVLRRIMAMGERCTAVLGNHDLHLLAAYAGVRKPSKSDTLDEVLQAPDAVDLIDWLRFRPLAHYEAGHLMVHAGVLAKWDVAKTLALAGEVEQALRGPNWRKALQKMYGNEPATWKDDHTGGKRMRVIINALTRIRLCTPSGHMEFATKVAPGAWPAGLVPWFDVPNRATRDVTVVFGHWSTLGLLMRPDVICLDTGCVWGGALSALRLHDRKLVQVKCKRFQDPNGD.

The protein belongs to the Ap4A hydrolase family.

The enzyme catalyses P(1),P(4)-bis(5'-adenosyl) tetraphosphate + H2O = 2 ADP + 2 H(+). Its function is as follows. Hydrolyzes diadenosine 5',5'''-P1,P4-tetraphosphate to yield ADP. The chain is Bis(5'-nucleosyl)-tetraphosphatase, symmetrical from Bordetella bronchiseptica (strain ATCC BAA-588 / NCTC 13252 / RB50) (Alcaligenes bronchisepticus).